We begin with the raw amino-acid sequence, 104 residues long: Large ribosomal subunit protein uL24 (104 aa).

Belongs to the universal ribosomal protein uL24 family. In terms of assembly, part of the 50S ribosomal subunit.

Its function is as follows. One of two assembly initiator proteins, it binds directly to the 5'-end of the 23S rRNA, where it nucleates assembly of the 50S subunit. Functionally, one of the proteins that surrounds the polypeptide exit tunnel on the outside of the subunit. The polypeptide is Large ribosomal subunit protein uL24 (Afipia carboxidovorans (strain ATCC 49405 / DSM 1227 / KCTC 32145 / OM5) (Oligotropha carboxidovorans)).